Here is a 249-residue protein sequence, read N- to C-terminus: Metallo-beta-lactamase type 2 (249 aa).

The N-terminal stretch at 1–22 (MLKKIKISLILALGLTSLQAFG) is a signal peptide. Zn(2+) is bound by residues His98, His100, Asp102, His161, and Cys180. Substrate is bound at residue Lys183. His222 lines the Zn(2+) pocket.

The protein belongs to the metallo-beta-lactamase superfamily. Class-B beta-lactamase family. Monomer. It depends on Zn(2+) as a cofactor.

The protein resides in the periplasm. The enzyme catalyses a beta-lactam + H2O = a substituted beta-amino acid. Confers resistance to the different beta-lactams antibiotics (penicillin, cephalosporin and carbapenem) via the hydrolysis of the beta-lactam ring. The polypeptide is Metallo-beta-lactamase type 2 (blaB3) (Elizabethkingia meningoseptica (Chryseobacterium meningosepticum)).